We begin with the raw amino-acid sequence, 302 residues long: Urease accessory protein UreD 1 (302 aa).

It belongs to the UreD family. UreD, UreF and UreG form a complex that acts as a GTP-hydrolysis-dependent molecular chaperone, activating the urease apoprotein by helping to assemble the nickel containing metallocenter of UreC. The UreE protein probably delivers the nickel.

The protein localises to the cytoplasm. In terms of biological role, required for maturation of urease via the functional incorporation of the urease nickel metallocenter. The chain is Urease accessory protein UreD 1 from Psychrobacter cryohalolentis (strain ATCC BAA-1226 / DSM 17306 / VKM B-2378 / K5).